Here is a 498-residue protein sequence, read N- to C-terminus: COP9 signalosome complex subunit 1 (498 aa).

The 182-residue stretch at 249-430 (SYLEAANSFI…HVLVSTQGDK (182 aa)) folds into the PCI domain.

Belongs to the CSN1 family. In terms of assembly, component of the COP9 signalosome (CSN) complex.

It is found in the cytoplasm. Its subcellular location is the nucleus. Its function is as follows. Component of the COP9 signalosome (CSN) complex that acts as an regulator of the ubiquitin (Ubl) conjugation pathway by mediating the deneddylation of the cullin subunit of SCF-type E3 ubiquitin-protein ligase complexes. The CSN complex seems to link protein degradation to sexual development. Required for fruit body formation. The polypeptide is COP9 signalosome complex subunit 1 (csnA) (Emericella nidulans (strain FGSC A4 / ATCC 38163 / CBS 112.46 / NRRL 194 / M139) (Aspergillus nidulans)).